The sequence spans 735 residues: Glutamine-dependent NAD(+) synthetase (735 aa).

Positions 4–274 (LRVATCNLNQ…VEVLDALVDL (271 aa)) constitute a CN hydrolase domain. E44 acts as the Proton acceptor; for glutaminase activity in catalysis. Catalysis depends on K113, which acts as the For glutaminase activity. Catalysis depends on C174, which acts as the Nucleophile; for glutaminase activity. A ligase region spans residues 324–711 (YHRPEEEIAF…STEGELRRRK (388 aa)). 354-361 (PLSGGADS) is a binding site for ATP. S356 is a catalytic residue.

This sequence in the C-terminal section; belongs to the NAD synthetase family.

The enzyme catalyses deamido-NAD(+) + L-glutamine + ATP + H2O = L-glutamate + AMP + diphosphate + NAD(+) + H(+). Its pathway is cofactor biosynthesis; NAD(+) biosynthesis; NAD(+) from deamido-NAD(+) (L-Gln route): step 1/1. The protein is Glutamine-dependent NAD(+) synthetase of Oryza sativa subsp. indica (Rice).